The following is a 138-amino-acid chain: Regulator of ribonuclease activity B (138 aa).

Residues 114-138 (YFEDPNGEDGDDEDFVDEDDDGVRH) form a disordered region. Acidic residues predominate over residues 118–138 (PNGEDGDDEDFVDEDDDGVRH).

The protein belongs to the RraB family. Interacts with the C-terminal region of Rne.

It localises to the cytoplasm. Its function is as follows. Globally modulates RNA abundance by binding to RNase E (Rne) and regulating its endonucleolytic activity. Can modulate Rne action in a substrate-dependent manner by altering the composition of the degradosome. The chain is Regulator of ribonuclease activity B from Escherichia coli (strain K12).